Here is a 405-residue protein sequence, read N- to C-terminus: Acetylornithine aminotransferase 1 (405 aa).

Pyridoxal 5'-phosphate-binding positions include 103-104 (GA) and F136. R139 provides a ligand contact to N(2)-acetyl-L-ornithine. 221–224 (DEVQ) lines the pyridoxal 5'-phosphate pocket. Position 250 is an N6-(pyridoxal phosphate)lysine (K250). S278 is a binding site for N(2)-acetyl-L-ornithine. T279 provides a ligand contact to pyridoxal 5'-phosphate.

This sequence belongs to the class-III pyridoxal-phosphate-dependent aminotransferase family. ArgD subfamily. In terms of assembly, homodimer. It depends on pyridoxal 5'-phosphate as a cofactor.

The protein localises to the cytoplasm. The enzyme catalyses N(2)-acetyl-L-ornithine + 2-oxoglutarate = N-acetyl-L-glutamate 5-semialdehyde + L-glutamate. Its pathway is amino-acid biosynthesis; L-arginine biosynthesis; N(2)-acetyl-L-ornithine from L-glutamate: step 4/4. This chain is Acetylornithine aminotransferase 1, found in Bradyrhizobium diazoefficiens (strain JCM 10833 / BCRC 13528 / IAM 13628 / NBRC 14792 / USDA 110).